The following is a 439-amino-acid chain: Glutamine synthetase (439 aa).

The region spanning 13–98 is the GS beta-grasp domain; the sequence is ENVRFIRLQF…VICDVYTPDG (86 aa). The 335-residue stretch at 105–439 folds into the GS catalytic domain; the sequence is PRYRLRRMME…NWELQRYLYL (335 aa). Residues glutamate 128 and glutamate 130 each coordinate Mg(2+). Glutamate 180 is a binding site for ATP. Glutamate 185 and glutamate 192 together coordinate Mg(2+). L-glutamate contacts are provided by residues 236 to 237 and glycine 237; that span reads NG. Residue histidine 241 participates in Mg(2+) binding. Residues 243–245 and serine 245 each bind ATP; that span reads HMS. Residues arginine 294, glutamate 300, and arginine 312 each contribute to the L-glutamate site. 3 residues coordinate ATP: arginine 312, arginine 317, and lysine 324. A Mg(2+)-binding site is contributed by glutamate 329. An L-glutamate-binding site is contributed by arginine 331.

The protein belongs to the glutamine synthetase family. Oligomer of 12 subunits arranged in the form of two hexagons. In its feedback-inhibited form, interacts with TnrA in order to block its DNA-binding activity. Mg(2+) serves as cofactor.

It localises to the cytoplasm. The catalysed reaction is L-glutamate + NH4(+) + ATP = L-glutamine + ADP + phosphate + H(+). With respect to regulation, inhibited by glutamine. Glutamine synthetase (GS) is an unusual multitasking protein that functions as an enzyme, a transcription coregulator, and a chaperone in ammonium assimilation and in the regulation of genes involved in nitrogen metabolism. It catalyzes the ATP-dependent biosynthesis of glutamine from glutamate and ammonia. Feedback-inhibited GlnA also interacts with and regulates the activity of the transcriptional regulator TnrA. During nitrogen limitation, TnrA is in its DNA-binding active state and turns on the transcription of genes required for nitrogen assimilation. Under conditions of nitrogen excess, feedback-inhibited GlnA forms a stable complex with TnrA, which inhibits its DNA-binding activity. In contrast, feedback-inhibited GlnA acts as a chaperone to stabilize the DNA-binding activity of GlnR, which represses the transcription of nitrogen assimilation genes. In Thermotoga maritima (strain ATCC 43589 / DSM 3109 / JCM 10099 / NBRC 100826 / MSB8), this protein is Glutamine synthetase.